Reading from the N-terminus, the 179-residue chain is Pyridoxal 5'-phosphate synthase subunit PdxT (179 aa).

Residue 48 to 50 (GES) participates in L-glutamine binding. C79 acts as the Nucleophile in catalysis. L-glutamine contacts are provided by residues R101 and 127–128 (IR). Catalysis depends on charge relay system residues H163 and E165.

The protein belongs to the glutaminase PdxT/SNO family. In the presence of PdxS, forms a dodecamer of heterodimers. Only shows activity in the heterodimer.

The catalysed reaction is aldehydo-D-ribose 5-phosphate + D-glyceraldehyde 3-phosphate + L-glutamine = pyridoxal 5'-phosphate + L-glutamate + phosphate + 3 H2O + H(+). The enzyme catalyses L-glutamine + H2O = L-glutamate + NH4(+). It functions in the pathway cofactor biosynthesis; pyridoxal 5'-phosphate biosynthesis. Catalyzes the hydrolysis of glutamine to glutamate and ammonia as part of the biosynthesis of pyridoxal 5'-phosphate. The resulting ammonia molecule is channeled to the active site of PdxS. The sequence is that of Pyridoxal 5'-phosphate synthase subunit PdxT from Francisella tularensis subsp. novicida (strain U112).